A 219-amino-acid chain; its full sequence is MSETAPAAPAAPAPAEKTPVKKKARKAAGGAKRKTSGPPVSELITKAVAASKERSGVSLAALKKALAAAGYDVEKNNSRIKLGLKSLVSKGTLVQTKGTGASGSFKLNKKAASGEAKPKAKRAGAAKAKKPAGAAKKPKKAAGTATAKKSTKKTPKKAKKPAAAAGAKKAKSPKKAKATKAKKAPKSPAKAKTVKPKAAKPKTSKPKAAKPKKTAAKKK.

The segment covering 1–15 has biased composition (low complexity); it reads MSETAPAAPAAPAPA. Residues 1-41 are disordered; the sequence is MSETAPAAPAAPAPAEKTPVKKKARKAAGGAKRKTSGPPVS. Ser2 is modified (N-acetylserine). Residue Ser2 is modified to Phosphoserine. Lys17 bears the N6-acetyllysine mark. Thr18 is subject to Phosphothreonine. The segment covering 20–35 has biased composition (basic residues); sequence VKKKARKAAGGAKRKT. The residue at position 26 (Lys26) is an N6-acetyllysine; alternate. N6-methyllysine; alternate is present on Lys26. Lys34 carries the post-translational modification N6-(beta-hydroxybutyryl)lysine; alternate. Residue Lys34 is modified to N6-succinyllysine; alternate. The residue at position 36 (Ser36) is a Phosphoserine. Residues 36–109 form the H15 domain; it reads SGPPVSELIT…GASGSFKLNK (74 aa). Lys52 is subject to N6-(beta-hydroxybutyryl)lysine. At Arg54 the chain carries Citrulline. N6-(beta-hydroxybutyryl)lysine is present on residues Lys64, Lys85, Lys90, and Lys106. Positions 92-219 are disordered; that stretch reads TLVQTKGTGA…KPKKTAAKKK (128 aa). Basic residues predominate over residues 119–140; that stretch reads KAKRAGAAKAKKPAGAAKKPKK. Thr146 is modified (phosphothreonine). Composition is skewed to basic residues over residues 149-160 and 168-185; these read KSTKKTPKKAKK and KKAK…KKAP. At Ser150 the chain carries ADP-ribosylserine. Ser187 is subject to Phosphoserine. A compositionally biased stretch (basic residues) spans 192–219; it reads KTVKPKAAKPKTSKPKAAKPKKTAAKKK.

It belongs to the histone H1/H5 family. Citrullination at Arg-54 (H1R54ci) by PADI4 takes place within the DNA-binding site of H1 and results in its displacement from chromatin and global chromatin decondensation, thereby promoting pluripotency and stem cell maintenance. In terms of processing, ADP-ribosylated on Ser-55, Ser-113 and Ser-150 in response to DNA damage. Post-translationally, H1 histones are progressively phosphorylated during the cell cycle, becoming maximally phosphorylated during late G2 phase and M phase, and being dephosphorylated sharply thereafter. Acetylated at Lys-26. Deacetylated at Lys-26 by SIRT1. In terms of processing, hydroxybutyrylation of histones is induced by starvation.

It is found in the nucleus. Its subcellular location is the chromosome. Its function is as follows. Histone H1 protein binds to linker DNA between nucleosomes forming the macromolecular structure known as the chromatin fiber. Histones H1 are necessary for the condensation of nucleosome chains into higher-order structured fibers. Also acts as a regulator of individual gene transcription through chromatin remodeling, nucleosome spacing and DNA methylation. This chain is Histone H1.4, found in Mus musculus (Mouse).